A 157-amino-acid chain; its full sequence is Small ribosomal subunit protein uS7cz/uS7cy (157 aa).

It belongs to the universal ribosomal protein uS7 family. As to quaternary structure, part of the 30S ribosomal subunit.

The protein localises to the plastid. The protein resides in the chloroplast. One of the primary rRNA binding proteins, it binds directly to 16S rRNA where it nucleates assembly of the head domain of the 30S subunit. The sequence is that of Small ribosomal subunit protein uS7cz/uS7cy (rps7-A) from Gnetum parvifolium (Small-leaved jointfir).